Consider the following 334-residue polypeptide: Probable GTP 3',8-cyclase (334 aa).

The 233-residue stretch at 24-256 (PYGRKVTGLR…RKKYIIDGVE (233 aa)) folds into the Radical SAM core domain. Arg-33 is a binding site for GTP. Residues Cys-40 and Cys-44 each coordinate [4Fe-4S] cluster. Tyr-46 serves as a coordination point for S-adenosyl-L-methionine. Cys-47 contacts [4Fe-4S] cluster. Lys-85 provides a ligand contact to GTP. S-adenosyl-L-methionine is bound at residue Gly-89. Residue Thr-113 coordinates GTP. Ser-137 serves as a coordination point for S-adenosyl-L-methionine. Residue Lys-176 participates in GTP binding. [4Fe-4S] cluster is bound by residues Cys-269 and Cys-272. Residue 274-276 (RLR) participates in GTP binding. Cys-286 is a binding site for [4Fe-4S] cluster.

The protein belongs to the radical SAM superfamily. MoaA family. [4Fe-4S] cluster serves as cofactor.

The enzyme catalyses GTP + AH2 + S-adenosyl-L-methionine = (8S)-3',8-cyclo-7,8-dihydroguanosine 5'-triphosphate + 5'-deoxyadenosine + L-methionine + A + H(+). Its pathway is cofactor biosynthesis; molybdopterin biosynthesis. Catalyzes the cyclization of GTP to (8S)-3',8-cyclo-7,8-dihydroguanosine 5'-triphosphate. In Methanosarcina acetivorans (strain ATCC 35395 / DSM 2834 / JCM 12185 / C2A), this protein is Probable GTP 3',8-cyclase.